A 403-amino-acid chain; its full sequence is Phosphopentomutase (403 aa).

6 residues coordinate Mn(2+): Asp13, Asp298, His303, Asp339, His340, and His351.

The protein belongs to the phosphopentomutase family. It depends on Mn(2+) as a cofactor.

It is found in the cytoplasm. The catalysed reaction is 2-deoxy-alpha-D-ribose 1-phosphate = 2-deoxy-D-ribose 5-phosphate. It carries out the reaction alpha-D-ribose 1-phosphate = D-ribose 5-phosphate. Its pathway is carbohydrate degradation; 2-deoxy-D-ribose 1-phosphate degradation; D-glyceraldehyde 3-phosphate and acetaldehyde from 2-deoxy-alpha-D-ribose 1-phosphate: step 1/2. Functionally, isomerase that catalyzes the conversion of deoxy-ribose 1-phosphate (dRib-1-P) and ribose 1-phosphate (Rib-1-P) to deoxy-ribose 5-phosphate (dRib-5-P) and ribose 5-phosphate (Rib-5-P), respectively. The polypeptide is Phosphopentomutase (Streptococcus thermophilus (strain ATCC BAA-250 / LMG 18311)).